Reading from the N-terminus, the 203-residue chain is MMIGIYIAALVIGYLFGSIPFGLILTKIAGTQDLRSIGSGNIGATNVLRTGRKGLAAATLLLDALKGTAAVIVAAYLASGTDAIAANAAMLAALGAFLGHLFPVWLKFKGGKGVAVYIGVLIGLFWPAAVVFCIMWLATAFTSRYSSLSALVASFVTPIFLWWFGHDSLASLFAVLTLLLFWMHRENIKRLQAGTESKIGQKK.

A run of 5 helical transmembrane segments spans residues 5–25, 55–75, 84–104, 118–138, and 159–179; these read IYIAALVIGYLFGSIPFGLIL, LAAATLLLDALKGTAAVIVAA, IAANAAMLAALGAFLGHLFPV, IGVLIGLFWPAAVVFCIMWLA, and IFLWWFGHDSLASLFAVLTLL.

The protein belongs to the PlsY family. As to quaternary structure, probably interacts with PlsX.

The protein resides in the cell inner membrane. The enzyme catalyses an acyl phosphate + sn-glycerol 3-phosphate = a 1-acyl-sn-glycero-3-phosphate + phosphate. The protein operates within lipid metabolism; phospholipid metabolism. Its function is as follows. Catalyzes the transfer of an acyl group from acyl-phosphate (acyl-PO(4)) to glycerol-3-phosphate (G3P) to form lysophosphatidic acid (LPA). This enzyme utilizes acyl-phosphate as fatty acyl donor, but not acyl-CoA or acyl-ACP. The sequence is that of Glycerol-3-phosphate acyltransferase from Rhodopseudomonas palustris (strain ATCC BAA-98 / CGA009).